Consider the following 176-residue polypeptide: NADH-quinone oxidoreductase subunit I 1 (176 aa).

4Fe-4S ferredoxin-type domains follow at residues 45–77 and 87–116; these read IVLTRDPEGGERCVACYLCSAACPVDCISMEAT and RWFRINFSRCIFCGLCAEACPTLAIQMTPD. [4Fe-4S] cluster-binding residues include cysteine 57, cysteine 60, cysteine 63, cysteine 67, cysteine 96, cysteine 99, cysteine 102, and cysteine 106.

This sequence belongs to the complex I 23 kDa subunit family. As to quaternary structure, NDH-1 is composed of 14 different subunits. Subunits NuoA, H, J, K, L, M, N constitute the membrane sector of the complex. It depends on [4Fe-4S] cluster as a cofactor.

Its subcellular location is the cell inner membrane. It carries out the reaction a quinone + NADH + 5 H(+)(in) = a quinol + NAD(+) + 4 H(+)(out). Its function is as follows. NDH-1 shuttles electrons from NADH, via FMN and iron-sulfur (Fe-S) centers, to quinones in the respiratory chain. The immediate electron acceptor for the enzyme in this species is believed to be ubiquinone. Couples the redox reaction to proton translocation (for every two electrons transferred, four hydrogen ions are translocated across the cytoplasmic membrane), and thus conserves the redox energy in a proton gradient. This Geobacter metallireducens (strain ATCC 53774 / DSM 7210 / GS-15) protein is NADH-quinone oxidoreductase subunit I 1.